Reading from the N-terminus, the 335-residue chain is L-threo-3-deoxy-hexylosonate aldolase (335 aa).

50-51 (SN) is a binding site for substrate. Lys175 functions as the Schiff-base intermediate with substrate in the catalytic mechanism.

This sequence belongs to the DapA family.

It carries out the reaction 2-dehydro-3-deoxy-L-galactonate = L-glyceraldehyde + pyruvate. It participates in carbohydrate acid metabolism. Its function is as follows. Mediates the conversion of 2-dehydro-3-deoxy-L-galactonate to pyruvate and L-glyceraldehyde in D-galacturonate catabolic process. The chain is L-threo-3-deoxy-hexylosonate aldolase (gaaC) from Aspergillus niger.